Here is a 176-residue protein sequence, read N- to C-terminus: MSMEAPRRGRRWVSLGMIALLAAIGLGLYWDQLSTPSGITPATSPRRAEGLLLGRLPLPMEPSLLSPLERLLEPPLRYKLMTIRHIPPVKPGTGMPHPYVGDCIQCHLMVGGPAAGSQFKTPYGAVLENLSRVRKLGPPILPTSRQPHPPAGRCIKCHDIVVKVPVDKKGGMRWQL.

The Cytoplasmic portion of the chain corresponds to 1-11 (MSMEAPRRGRR). The chain crosses the membrane as a helical span at residues 12–30 (WVSLGMIALLAAIGLGLYW). Residues 31-176 (DQLSTPSGIT…DKKGGMRWQL (146 aa)) are Lumenal-facing. The MCR (magnetochrome) 1 signature appears at 89 to 109 (VKPGTGMPHPYVGDCIQCHLM). Positions 103, 106, 107, 154, 157, and 158 each coordinate heme. The MCR 2 motif lies at 140–160 (ILPTSRQPHPPAGRCIKCHDI).

Belongs to the magnetosome MamT family. The cofactor is heme.

It is found in the magnetosome membrane. Its function is as follows. May play a role in magnetite crystal maturation. May transfer electrons to balance the Fe(2+)-Fe(3+) ratio during magnetite formation. The sequence is that of Magnetosome protein MamT (mamT) from Paramagnetospirillum magneticum (strain ATCC 700264 / AMB-1) (Magnetospirillum magneticum).